The primary structure comprises 126 residues: Small ribosomal subunit protein uS12 (126 aa).

Residue aspartate 89 is modified to 3-methylthioaspartic acid.

It belongs to the universal ribosomal protein uS12 family. As to quaternary structure, part of the 30S ribosomal subunit. Contacts proteins S8 and S17. May interact with IF1 in the 30S initiation complex.

With S4 and S5 plays an important role in translational accuracy. In terms of biological role, interacts with and stabilizes bases of the 16S rRNA that are involved in tRNA selection in the A site and with the mRNA backbone. Located at the interface of the 30S and 50S subunits, it traverses the body of the 30S subunit contacting proteins on the other side and probably holding the rRNA structure together. The combined cluster of proteins S8, S12 and S17 appears to hold together the shoulder and platform of the 30S subunit. The protein is Small ribosomal subunit protein uS12 of Polynucleobacter asymbioticus (strain DSM 18221 / CIP 109841 / QLW-P1DMWA-1) (Polynucleobacter necessarius subsp. asymbioticus).